The chain runs to 334 residues: Phosphoribosylformylglycinamidine cyclo-ligase (334 aa).

The protein belongs to the AIR synthase family.

It localises to the cytoplasm. The enzyme catalyses 2-formamido-N(1)-(5-O-phospho-beta-D-ribosyl)acetamidine + ATP = 5-amino-1-(5-phospho-beta-D-ribosyl)imidazole + ADP + phosphate + H(+). It functions in the pathway purine metabolism; IMP biosynthesis via de novo pathway; 5-amino-1-(5-phospho-D-ribosyl)imidazole from N(2)-formyl-N(1)-(5-phospho-D-ribosyl)glycinamide: step 2/2. The polypeptide is Phosphoribosylformylglycinamidine cyclo-ligase (Thermococcus gammatolerans (strain DSM 15229 / JCM 11827 / EJ3)).